We begin with the raw amino-acid sequence, 622 residues long: Transcription factor SKN7 (622 aa).

Over residues 1–12 (MSFSTINSNVNK) the composition is skewed to polar residues. Residues 1–29 (MSFSTINSNVNKTTGDSNNNTTENSSTAD) form a disordered region. Over residues 13 to 27 (TTGDSNNNTTENSST) the composition is skewed to low complexity. The interval 84–190 (ANEFVRKLFR…GLDNIKRKIP (107 aa)) is DNA-binding domain. The segment at 212–303 (TNPNNPSGSL…NNFNTLCSTL (92 aa)) is hydrophobic repeat HR-A/B. A coiled-coil region spans residues 240-260 (FGNLRRRVDKLQKELDMSKME). Residues 378 to 492 (HVLLVEDDAV…DLHSILIRYL (115 aa)) form the Response regulatory domain. Asp-427 bears the 4-aspartylphosphate mark. 2 disordered regions span residues 501 to 579 (QQLP…QHHN) and 599 to 622 (TVPH…NQLS). The segment covering 512-527 (THSNTNTANSNPNTIN) has biased composition (low complexity). A compositionally biased stretch (polar residues) spans 537–554 (DNPSTTTPVTPGASISSA). The segment covering 555–578 (QHVQQGQQEQQHQIFHAQQQQQHH) has biased composition (low complexity). Residues 600–622 (VPHSSMGSTPQLPQSTLQENQLS) show a composition bias toward polar residues.

This sequence belongs to the SKN7 family. In terms of assembly, homotrimer. Post-translationally, the phosphorelay mechanism involves the sequential transfer of a phosphate group from 'His-576' (H1) to 'Asp-1144' (D1) of SLN1, then to 'His-64' (H2) of YPD1 and finally to Asp-427 (D2) of SKN7.

The protein resides in the nucleus. Its function is as follows. Transcription factor that is part of a SLN1-YPD1-SKN7 two-component regulatory system, which controls gene expression in response to changes in the osmolarity of the extracellular environment. Under low osmotic conditions, phosphorylated and activated by the phosphorelay intermediate protein YPD1. Also activated in response to oxidative stress, independent on the two-component regulatory system. Regulates heat shock genes in response to oxidative stress and genes involved in cell wall integrity in response to osmotic changes. The polypeptide is Transcription factor SKN7 (SKN7) (Saccharomyces cerevisiae (strain ATCC 204508 / S288c) (Baker's yeast)).